The primary structure comprises 329 residues: D-alanine--D-alanine ligase (329 aa).

An ATP-grasp domain is found at 120–326; that stretch reads KLWYDALDIP…FHEFLEDCIN (207 aa). 150–205 contacts ATP; sequence AFEKWGKVFVKAARQGSSVGCYSVAEKQAIAKAVNDAFGYSDQVLVEKAVKPRELE. Mg(2+) contacts are provided by Asp-280, Glu-293, and Asn-295.

It belongs to the D-alanine--D-alanine ligase family. Mg(2+) is required as a cofactor. It depends on Mn(2+) as a cofactor.

It localises to the cytoplasm. It catalyses the reaction 2 D-alanine + ATP = D-alanyl-D-alanine + ADP + phosphate + H(+). It participates in cell wall biogenesis; peptidoglycan biosynthesis. Functionally, cell wall formation. The protein is D-alanine--D-alanine ligase of Vibrio parahaemolyticus serotype O3:K6 (strain RIMD 2210633).